Here is a 2409-residue protein sequence, read N- to C-terminus: Reducing polyketide synthase FUB1 (2409 aa).

Residues 1-43 are compositionally biased toward low complexity; it reads MTLSNGSNGANGTSNGHGAHPSANGFHNAANGGANNGTPNGGA. The segment at 1–49 is disordered; sequence MTLSNGSNGANGTSNGHGAHPSANGFHNAANGGANNGTPNGGAEYNASL. A Ketosynthase family 3 (KS3) domain is found at 57-479; that stretch reads SSAIAVIGVS…GANAHAVLDD (423 aa). Residues Cys230, His365, and His403 each act as for beta-ketoacyl synthase activity in the active site. The segment at 608 to 929 is malonyl-CoA:ACP transacylase (MAT) domain; that stretch reads TFIFTGQGAQ…FSAIKRKQDA (322 aa). The For malonyltransferase activity role is filled by Ser699. The segment at 994-1127 is N-terminal hotdog fold; sequence LELLGVRDPR…GLVSTSYKRE (134 aa). Positions 994 to 1307 constitute a PKS/mFAS DH domain; sequence LELLGVRDPR…TVPLRGASDP (314 aa). A dehydratase (DH) domain region spans residues 995–1302; that stretch reads ELLGVRDPRS…LEGCKTVPLR (308 aa). His1026 functions as the Proton acceptor; for dehydratase activity in the catalytic mechanism. Positions 1155-1307 are C-terminal hotdog fold; the sequence is LPSVDPTVFY…TVPLRGASDP (153 aa). Residue Asp1220 is the Proton donor; for dehydratase activity of the active site. The tract at residues 1713–2025 is enoyl reductase (ER) domain; the sequence is GLLDTLEYLS…SGGHVGKIVL (313 aa). The ketoreductase (KR) domain stretch occupies residues 2049 to 2225; the sequence is ATYVLIGGLG…AATSINLSLV (177 aa). Residues 2328-2405 form the Carrier domain; sequence EVYEIVLQQL…GFAKKVMAKS (78 aa). Ser2365 is subject to O-(pantetheine 4'-phosphoryl)serine.

Its pathway is mycotoxin biosynthesis. In terms of biological role, reducing polyketide synthase; part of the gene cluster that mediates the biosynthesis of fusaric acid, a mycotoxin with low to moderate toxicity to animals and humans, but with high phytotoxic properties. L-aspartate is suggested as fusaric acid amino acid precursor that is activated and further processed to O-acetyl-L-homoserine by cluster enzymes aspartate kinase FUB3 and homoserine O-acetyltransferase FUB5, as well as enzymes of the primary metabolism. The polyketide synthase (PKS) FUB1 generates the triketide trans-2-hexenal which is presumptively released by the hydrolase FUB4 and linked to the NRPS-bound amino acid precursor by NAD(P)-dependent dehydrogenase FUB6. FUB1, FUB4, and the non-canonical NRPS Fub8 may form an enzyme complex. Further processing of the NRPS-bound intermediate might be carried out by FUB6 and the sulfhydrylase FUB7, enabling a spontaneous electrocyclization to close the carbon backbone of fusaric acid. Dihydrofusaric acid is likely to be released via reduction by the thioester reductase (TR) domain of FUB8 whereupon the final oxidation to fusaric acid may (also) be performed by the FMN-dependent dehydrogenase FUB9. This is Reducing polyketide synthase FUB1 from Gibberella moniliformis (strain M3125 / FGSC 7600) (Maize ear and stalk rot fungus).